Reading from the N-terminus, the 36-residue chain is Egg-laying hormone (36 aa).

Position 36 is a lysine amide (K36).

It belongs to the molluscan ELH family. In terms of tissue distribution, bag cell neurons.

The protein resides in the secreted. Functionally, ELH acts as a neurotransmitter locally, upon neurons of the abdominal ganglion and as a hormone by diffusing into the circulating hemolymph and modulating the activity of other organs. It specifically causes contraction of smooth muscle in the ovotestis and expulsion of the egg string. This chain is Egg-laying hormone, found in Aplysia fasciata (Mottled sea hare).